The chain runs to 466 residues: MTTTEAPSALSFECETGNYHTFCPISCVAWLYQKIEDSFFLVIGTKTCGYFLQNAMGVMIFAEPRYAMAELEEGDISAQLNDYAELKRLCTQIKRDRNPSVIVWIGTCTTEIIKMDLEGLAPKLEAEIGIPIVVARANGLDYAFTQGEDTVLAAMAARCPEAATSEADQQERTNAIQRLLQFGKSPAAEQQPASSKHPPLILFGSVPDPVATQLTIELAKQGITVSGWLPAKRYTELPVIAEGSYAIGLNPFLSRTATTLMRRRKCKVIGAPFPIGPDGSRAWIEKICSVLEIEPQGLAEREAQVWDSIEDYRQLVEGKQVFFMGDNLWEISLARFLVRCGMRCPEIGIPYLDRRYLGAELAMLEATCQSMGVPLPRLVEKPDNYNQLQRIEALQPDLVITGMAHANPLEARGISTKWSVEFTFAQIHGFGNARAILELVTRPLRRNLALGTLGGSQWVSEAVTSR.

[4Fe-4S] cluster is bound by residues C23, C48, and C108.

This sequence belongs to the BchN/ChlN family. In terms of assembly, protochlorophyllide reductase is composed of three subunits; ChlL, ChlN and ChlB. Forms a heterotetramer of two ChlB and two ChlN subunits. The cofactor is [4Fe-4S] cluster.

The catalysed reaction is chlorophyllide a + oxidized 2[4Fe-4S]-[ferredoxin] + 2 ADP + 2 phosphate = protochlorophyllide a + reduced 2[4Fe-4S]-[ferredoxin] + 2 ATP + 2 H2O. The protein operates within porphyrin-containing compound metabolism; chlorophyll biosynthesis (light-independent). Functionally, component of the dark-operative protochlorophyllide reductase (DPOR) that uses Mg-ATP and reduced ferredoxin to reduce ring D of protochlorophyllide (Pchlide) to form chlorophyllide a (Chlide). This reaction is light-independent. The NB-protein (ChlN-ChlB) is the catalytic component of the complex. This is Light-independent protochlorophyllide reductase subunit N from Synechococcus elongatus (strain ATCC 33912 / PCC 7942 / FACHB-805) (Anacystis nidulans R2).